Consider the following 549-residue polypeptide: Serine/threonine-protein phosphatase PPQ (549 aa).

Polar residues predominate over residues 1–13 (MRRSPSRSNNNFA). Disordered stretches follow at residues 1-50 (MRRS…RSLP), 64-85 (YNTL…DNLL), 133-158 (TSST…NYSS), and 189-219 (SRVK…PKSS). Low complexity-rich tracts occupy residues 16-32 (NCST…TTPS) and 68-83 (ASAG…SNDN). The span at 205–217 (APSSPTSGIPNPK) shows a compositional bias: polar residues. Mn(2+) is bound by residues aspartate 301, histidine 303, aspartate 329, and asparagine 361. Residue histidine 362 is the Proton donor of the active site. Residues histidine 410 and histidine 485 each coordinate Mn(2+).

It belongs to the PPP phosphatase family. PP-Z subfamily. Mn(2+) serves as cofactor.

The catalysed reaction is O-phospho-L-seryl-[protein] + H2O = L-seryl-[protein] + phosphate. It carries out the reaction O-phospho-L-threonyl-[protein] + H2O = L-threonyl-[protein] + phosphate. Functionally, phosphatase involved in the regulation of protein synthesis. Affects translational accuracy. The chain is Serine/threonine-protein phosphatase PPQ (PPQ1) from Saccharomyces cerevisiae (strain ATCC 204508 / S288c) (Baker's yeast).